A 222-amino-acid polypeptide reads, in one-letter code: Eukaryotic translation initiation factor 3 subunit K (222 aa).

One can recognise a PCI domain in the interval 46-208 (YDLEANLAVL…KIKTKNITEK (163 aa)).

It belongs to the eIF-3 subunit K family. As to quaternary structure, component of the eukaryotic translation initiation factor 3 (eIF-3) complex. The eIF-3 complex interacts with pix.

It is found in the cytoplasm. Its function is as follows. Component of the eukaryotic translation initiation factor 3 (eIF-3) complex, which is involved in protein synthesis of a specialized repertoire of mRNAs and, together with other initiation factors, stimulates binding of mRNA and methionyl-tRNAi to the 40S ribosome. The eIF-3 complex specifically targets and initiates translation of a subset of mRNAs involved in cell proliferation. The protein is Eukaryotic translation initiation factor 3 subunit K of Drosophila mojavensis (Fruit fly).